A 419-amino-acid chain; its full sequence is 3-isopropylmalate dehydratase large subunit (419 aa).

[4Fe-4S] cluster contacts are provided by Cys300, Cys360, and Cys363.

The protein belongs to the aconitase/IPM isomerase family. LeuC type 2 subfamily. As to quaternary structure, heterodimer of LeuC and LeuD. [4Fe-4S] cluster serves as cofactor.

The catalysed reaction is (2R,3S)-3-isopropylmalate = (2S)-2-isopropylmalate. The protein operates within amino-acid biosynthesis; L-leucine biosynthesis; L-leucine from 3-methyl-2-oxobutanoate: step 2/4. Catalyzes the isomerization between 2-isopropylmalate and 3-isopropylmalate, via the formation of 2-isopropylmaleate. The chain is 3-isopropylmalate dehydratase large subunit from Clostridium botulinum (strain Alaska E43 / Type E3).